A 177-amino-acid chain; its full sequence is UPF0114 protein HP_0189 (177 aa).

Transmembrane regions (helical) follow at residues 15-35, 54-74, and 145-165; these read WLLA…GYVF, LVLS…VLMV, and PIFW…LAAV.

The protein belongs to the UPF0114 family.

The protein resides in the cell membrane. This is UPF0114 protein HP_0189 from Helicobacter pylori (strain ATCC 700392 / 26695) (Campylobacter pylori).